A 760-amino-acid polypeptide reads, in one-letter code: Anti-sigma-I factor RsgI6 (760 aa).

Residues 1-55 lie on the Cytoplasmic side of the membrane; it reads MIVGKVLDMDEKTAIIMTDDFAFLNVVRTSEMAVGKKVKVLDSDIIKPKNSLRRY. The RsgI N-terminal anti-sigma domain maps to 2–49; sequence IVGKVLDMDEKTAIIMTDDFAFLNVVRTSEMAVGKKVKVLDSDIIKPK. A helical transmembrane segment spans residues 56–76; sequence LPVAAVAACFVIVLSFVLMFI. At 77 to 760 the chain is on the extracellular side; that stretch reads NGNTARKNIY…GTLQTTYRIP (684 aa). The segment at 274–352 is disordered; the sequence is AINTGPAESA…STPKPVSPVQ (79 aa). The segment covering 291-352 has biased composition (polar residues); it reads LPATSTPGRT…STPKPVSPVQ (62 aa). The 300-residue stretch at 402–701 folds into the GH10 domain; it reads DSSNKPIENA…NEAGRRFESL (300 aa). E538 acts as the Proton donor in catalysis. E635 functions as the Nucleophile in the catalytic mechanism.

The protein in the C-terminal section; belongs to the glycosyl hydrolase 10 (cellulase F) family. In terms of assembly, interacts (via RsgI N-terminal anti-sigma domain) with SigI6.

The protein localises to the cell membrane. The catalysed reaction is Endohydrolysis of (1-&gt;4)-beta-D-xylosidic linkages in xylans.. The protein operates within glycan degradation; xylan degradation. Functionally, anti-sigma factor for SigI6. Negatively regulates SigI6 activity through direct interaction. Binding of the polysaccharide substrate to the extracellular C-terminal sensing domain of RsgI6 may induce a conformational change in its N-terminal cytoplasmic region, leading to the release and activation of SigI6. Binds to and hydrolyzes insoluble and soluble xylan substrates. Has low enzymatic activity. The sequence is that of Anti-sigma-I factor RsgI6 from Acetivibrio thermocellus (strain ATCC 27405 / DSM 1237 / JCM 9322 / NBRC 103400 / NCIMB 10682 / NRRL B-4536 / VPI 7372) (Clostridium thermocellum).